An 876-amino-acid chain; its full sequence is DNA polymerase I (876 aa).

The 310-residue stretch at 1–310 folds into the 5'-3' exonuclease domain; sequence MKNKLVLIDG…FAIADSVTDE (310 aa). Residues 289 to 876 are subtilisin large fragment; sequence TDEGEKPLAG…HYGPTWYDAK (588 aa). Positions 469–876 are polymerase; sequence EQDRLLTELE…HYGPTWYDAK (408 aa).

Belongs to the DNA polymerase type-A family. In terms of assembly, single-chain monomer with multiple functions.

It carries out the reaction DNA(n) + a 2'-deoxyribonucleoside 5'-triphosphate = DNA(n+1) + diphosphate. Functionally, in addition to polymerase activity, the recombinant enzyme has strand displacement and 5'-3' exonuclease activity, but lacks proofreading 3'-5' exonuclease activity. This is DNA polymerase I (polA) from Geobacillus stearothermophilus (Bacillus stearothermophilus).